The primary structure comprises 89 residues: UPF0223 protein BCA_4066 (89 aa).

This sequence belongs to the UPF0223 family.

The protein is UPF0223 protein BCA_4066 of Bacillus cereus (strain 03BB102).